A 381-amino-acid chain; its full sequence is Estradiol 17-beta-dehydrogenase 2 (381 aa).

Residues 4 to 24 (FSSESAWLCLTATAVLGGMLL) traverse the membrane as a helical; Signal-anchor for type II membrane protein segment. 83–112 (QKAVLVTGADSGFGHALAKHLDKLGFTVFA) contacts NAD(+). S220 serves as a coordination point for substrate. The active-site Proton acceptor is Y233.

It belongs to the short-chain dehydrogenases/reductases (SDR) family. In terms of assembly, homodimer. As to expression, highly expressed in the placenta, and in the small intestine, and liver.

It localises to the endoplasmic reticulum membrane. The catalysed reaction is 17beta-estradiol + NAD(+) = estrone + NADH + H(+). It catalyses the reaction testosterone + NAD(+) = androst-4-ene-3,17-dione + NADH + H(+). The enzyme catalyses 17beta-hydroxy-5alpha-androstan-3-one + NAD(+) = 5alpha-androstan-3,17-dione + NADH + H(+). It carries out the reaction (20S)-hydroxypregn-4-en-3-one + NAD(+) = progesterone + NADH + H(+). Catalyzes the NAD-dependent oxidation of highly active 17beta-hydroxysteroids, such as estradiol (E2), testosterone (T), and dihydrotestosterone (DHT), to their less active forms and thus regulates the biological potency of these steroids. Oxidizes estradiol to estrone, testosterone to androstenedione, and dihydrotestosterone to 5alpha-androstan-3,17-dione. Also has 20-alpha-HSD activity. The polypeptide is Estradiol 17-beta-dehydrogenase 2 (Hsd17b2) (Rattus norvegicus (Rat)).